Reading from the N-terminus, the 235-residue chain is Glycerol-3-phosphate acyltransferase (235 aa).

Helical transmembrane passes span 4 to 24 (LLAI…IMAG), 56 to 76 (SVTL…VAFF), 94 to 114 (LLAG…GFKG), 125 to 145 (LIGI…LTVW), 152 to 172 (VASI…KYVF), and 191 to 211 (FHDS…LAIL).

The protein belongs to the PlsY family. As to quaternary structure, probably interacts with PlsX.

Its subcellular location is the cell inner membrane. It carries out the reaction an acyl phosphate + sn-glycerol 3-phosphate = a 1-acyl-sn-glycero-3-phosphate + phosphate. The protein operates within lipid metabolism; phospholipid metabolism. Functionally, catalyzes the transfer of an acyl group from acyl-phosphate (acyl-PO(4)) to glycerol-3-phosphate (G3P) to form lysophosphatidic acid (LPA). This enzyme utilizes acyl-phosphate as fatty acyl donor, but not acyl-CoA or acyl-ACP. The protein is Glycerol-3-phosphate acyltransferase of Chlorobium luteolum (strain DSM 273 / BCRC 81028 / 2530) (Pelodictyon luteolum).